The chain runs to 290 residues: Fructokinase (290 aa).

Thr130 serves as a coordination point for ATP. Zn(2+)-binding residues include His153, Cys169, His172, and Cys175. Residues Pro183 and 231 to 235 (GVMEK) contribute to the ATP site.

The protein belongs to the ROK (NagC/XylR) family. As to quaternary structure, homodimer. It depends on Mg(2+) as a cofactor.

The enzyme catalyses D-fructose + ATP = D-fructose 6-phosphate + ADP + H(+). Its activity is regulated as follows. Inactivated by EDTA. Inhibition by zinc ions (Potential). The chain is Fructokinase (scrK) from Lactococcus lactis subsp. cremoris (Streptococcus cremoris).